Reading from the N-terminus, the 133-residue chain is Small ribosomal subunit protein uS8 (133 aa).

The disordered stretch occupies residues 1–32; it reads MANHDPISDMLTRIRNASEKRHESTKVPASRM. Over residues 16–25 the composition is skewed to basic and acidic residues; the sequence is NASEKRHEST.

The protein belongs to the universal ribosomal protein uS8 family. Part of the 30S ribosomal subunit. Contacts proteins S5 and S12.

One of the primary rRNA binding proteins, it binds directly to 16S rRNA central domain where it helps coordinate assembly of the platform of the 30S subunit. In Synechococcus sp. (strain CC9311), this protein is Small ribosomal subunit protein uS8.